The sequence spans 315 residues: Zinc metalloproteinase nas-4 (315 aa).

The signal sequence occupies residues 1–20; that stretch reads MMTIQRYSLVFCAIFATCWT. The N-linked (GlcNAc...) asparagine glycan is linked to Asn71. Residues 95–290 enclose the Peptidase M12A domain; that stretch reads NAIKQIYRRW…RKINKLYNCP (196 aa). Intrachain disulfides connect Cys137–Cys289 and Cys160–Cys179. Position 187 (His187) interacts with Zn(2+). Glu188 is a catalytic residue. Positions 191 and 197 each coordinate Zn(2+). The tract at residues 291–315 is disordered; it reads GVSGNNNNNNNNQINSNSIVNHPQV.

The cofactor is Zn(2+). Digestive tract. Found in the pharynx cells of the procorpus, metacorpus, isthmus and terminal bulb, and in the terminal bulb lumen.

Its subcellular location is the secreted. Functionally, metalloprotease. May be involved in digestion. This is Zinc metalloproteinase nas-4 (nas-4) from Caenorhabditis elegans.